The sequence spans 104 residues: Large ribosomal subunit protein bL21 (104 aa).

This sequence belongs to the bacterial ribosomal protein bL21 family. In terms of assembly, part of the 50S ribosomal subunit. Contacts protein L20.

Its function is as follows. This protein binds to 23S rRNA in the presence of protein L20. The polypeptide is Large ribosomal subunit protein bL21 (Helicobacter pylori (strain P12)).